Here is a 118-residue protein sequence, read N- to C-terminus: MISKPDKNKTRQKRHARVRGKISGTAECPRLNVYRSNKNIYAQVIDDVAGVTLVSASTLDSEVSGNTKTEQASSVGAVVAKRAVEKGIKEVVFDRGGYLYHGRVQALAEAARENGLDF.

It belongs to the universal ribosomal protein uL18 family. In terms of assembly, part of the 50S ribosomal subunit; part of the 5S rRNA/L5/L18/L25 subcomplex. Contacts the 5S and 23S rRNAs.

This is one of the proteins that bind and probably mediate the attachment of the 5S RNA into the large ribosomal subunit, where it forms part of the central protuberance. The protein is Large ribosomal subunit protein uL18 of Ligilactobacillus salivarius (strain UCC118) (Lactobacillus salivarius).